A 107-amino-acid chain; its full sequence is uncharacterized protein (107 aa).

The 102-residue stretch at Lys6–Ser107 folds into the Glutaredoxin domain. Lys23 contacts glutathione. Cys31 provides a ligand contact to [2Fe-2S] cluster. Glutathione is bound by residues Arg60 and Ser85 to Asp86.

It belongs to the glutaredoxin family. Monothiol subfamily.

This is an uncharacterized protein from Synechocystis sp. (strain ATCC 27184 / PCC 6803 / Kazusa).